Consider the following 526-residue polypeptide: Zinc finger protein 69 homolog (526 aa).

Residues 1–39 (MPQQLLITLPTEASTWVKLQHPKKAVEGAPLWEDVTKMF) enclose the SCAN box domain. The KRAB domain occupies 76 to 147 (LTFKDISIDF…EKEGPGDPSS (72 aa)). 9 C2H2-type zinc fingers span residues 271 to 293 (YECN…MRIH), 299 to 321 (FRCK…QRIH), 327 to 349 (FECE…HRTH), 355 to 377 (YVCD…LRTH), 383 to 405 (FTCN…IRIH), 411 to 433 (YACT…QRIH), 439 to 461 (YKCK…KTVH), 467 to 489 (YECN…QRHH), and 495 to 517 (YECN…HEIH).

The protein belongs to the krueppel C2H2-type zinc-finger protein family. As to expression, expressed in visceral and subcutaneous adipose tissue.

The protein resides in the nucleus. In terms of biological role, putative transcription factor that appears to regulate lipid metabolism. The protein is Zinc finger protein 69 homolog (ZFP69) of Homo sapiens (Human).